Here is a 190-residue protein sequence, read N- to C-terminus: Hypoxanthine/guanine phosphoribosyltransferase (190 aa).

Belongs to the purine/pyrimidine phosphoribosyltransferase family. Archaeal HPRT subfamily. As to quaternary structure, homodimer.

The protein localises to the cytoplasm. It catalyses the reaction IMP + diphosphate = hypoxanthine + 5-phospho-alpha-D-ribose 1-diphosphate. It carries out the reaction GMP + diphosphate = guanine + 5-phospho-alpha-D-ribose 1-diphosphate. It participates in purine metabolism; IMP biosynthesis via salvage pathway; IMP from hypoxanthine: step 1/1. Its function is as follows. Catalyzes a salvage reaction resulting in the formation of IMP that is energically less costly than de novo synthesis. The chain is Hypoxanthine/guanine phosphoribosyltransferase from Methanosalsum zhilinae (strain DSM 4017 / NBRC 107636 / OCM 62 / WeN5) (Methanohalophilus zhilinae).